The sequence spans 81 residues: Exodeoxyribonuclease 7 small subunit (81 aa).

Belongs to the XseB family. As to quaternary structure, heterooligomer composed of large and small subunits.

It localises to the cytoplasm. It carries out the reaction Exonucleolytic cleavage in either 5'- to 3'- or 3'- to 5'-direction to yield nucleoside 5'-phosphates.. Functionally, bidirectionally degrades single-stranded DNA into large acid-insoluble oligonucleotides, which are then degraded further into small acid-soluble oligonucleotides. In Ruegeria sp. (strain TM1040) (Silicibacter sp.), this protein is Exodeoxyribonuclease 7 small subunit.